The chain runs to 177 residues: Large ribosomal subunit protein uL6 (177 aa).

This sequence belongs to the universal ribosomal protein uL6 family. As to quaternary structure, part of the 50S ribosomal subunit.

Its function is as follows. This protein binds to the 23S rRNA, and is important in its secondary structure. It is located near the subunit interface in the base of the L7/L12 stalk, and near the tRNA binding site of the peptidyltransferase center. The polypeptide is Large ribosomal subunit protein uL6 (Psychromonas ingrahamii (strain DSM 17664 / CCUG 51855 / 37)).